The primary structure comprises 88 residues: UPF0298 protein Bcer98_2635 (88 aa).

It belongs to the UPF0298 family.

It is found in the cytoplasm. In Bacillus cytotoxicus (strain DSM 22905 / CIP 110041 / 391-98 / NVH 391-98), this protein is UPF0298 protein Bcer98_2635.